The primary structure comprises 317 residues: Small ribosomal subunit protein RACK1 (317 aa).

7 WD repeats span residues 13–44 (GHSG…IMWK), 61–91 (GHSH…RLWD), 103–133 (GHTK…KLWN), 146–178 (SHTE…KVWN), 190–220 (GHTG…MLWD), 231–260 (DGGD…KIWD), and 281–311 (AEPP…RVWQ).

Belongs to the WD repeat G protein beta family. Ribosomal protein RACK1 subfamily.

The protein resides in the cytoplasm. In terms of biological role, involved in the recruitment, assembly and/or regulation of a variety of signaling molecules. Interacts with a wide variety of proteins and plays a role in many cellular processes. Required for VANGL2 membrane localization, inhibits Wnt signaling and regulates cellular polarization and oriented cell division during gastrulation. The polypeptide is Small ribosomal subunit protein RACK1 (gnb2l1) (Danio rerio (Zebrafish)).